Consider the following 142-residue polypeptide: MAPSTKATAAKKAVVKGTNGKKALKVRTSASFRLPKTLKLARSPKYATKAVPHYNRLDSYKVIEQPITSETAMKKVEDGNTLVFKVSLKANKYQIKKAVKELYEVDVLSVNTLVRPNGTKKAYVRLTADFDALDIANRIGYI.

Belongs to the universal ribosomal protein uL23 family.

The protein is Large ribosomal subunit protein uL23 (RPL25) of Kluyveromyces lactis (strain ATCC 8585 / CBS 2359 / DSM 70799 / NBRC 1267 / NRRL Y-1140 / WM37) (Yeast).